Reading from the N-terminus, the 71-residue chain is Small ribosomal subunit protein bS21 (71 aa).

It belongs to the bacterial ribosomal protein bS21 family.

This Buchnera aphidicola subsp. Acyrthosiphon pisum (strain 5A) protein is Small ribosomal subunit protein bS21.